The sequence spans 207 residues: Probable GTP-binding protein EngB (207 aa).

Positions 22–194 (DLPEIAFAGR…WRRIEEVLPA (173 aa)) constitute an EngB-type G domain. GTP is bound by residues 30-37 (GRSNVGKS), 57-61 (GRTQL), 75-78 (DLPG), 142-145 (TKCD), and 173-175 (FSA). Residues Ser37 and Thr59 each contribute to the Mg(2+) site.

The protein belongs to the TRAFAC class TrmE-Era-EngA-EngB-Septin-like GTPase superfamily. EngB GTPase family. Requires Mg(2+) as cofactor.

Its function is as follows. Necessary for normal cell division and for the maintenance of normal septation. This Geotalea daltonii (strain DSM 22248 / JCM 15807 / FRC-32) (Geobacter daltonii) protein is Probable GTP-binding protein EngB.